We begin with the raw amino-acid sequence, 85 residues long: Large ribosomal subunit protein bL31 (85 aa).

A disordered region spans residues 64-85 (KYGMSESQGAGGKGNAKKKDEK).

Belongs to the bacterial ribosomal protein bL31 family. Type A subfamily. In terms of assembly, part of the 50S ribosomal subunit.

Binds the 23S rRNA. This chain is Large ribosomal subunit protein bL31, found in Acaryochloris marina (strain MBIC 11017).